A 483-amino-acid chain; its full sequence is Altronate oxidoreductase (483 aa).

18-29 (IIQFGEGNFLRA) is a binding site for NAD(+).

This sequence belongs to the mannitol dehydrogenase family. UxaB subfamily.

It carries out the reaction D-altronate + NAD(+) = keto-D-tagaturonate + NADH + H(+). It participates in carbohydrate metabolism; pentose and glucuronate interconversion. The protein is Altronate oxidoreductase (uxaB) of Escherichia coli O157:H7.